Consider the following 146-residue polypeptide: uncharacterized protein (146 aa).

A helical transmembrane segment spans residues 7–27; it reads FVLSITIVLVILIIIAFIWYN.

This sequence belongs to the asfivirus E146L family.

It localises to the host membrane. The protein localises to the virion. This is an uncharacterized protein from Ornithodoros (relapsing fever ticks).